The following is a 237-amino-acid chain: V-type proton ATPase subunit E3 (237 aa).

Methionine 1 is subject to N-acetylmethionine. Residues 9 to 67 (QIQQMVRFIRQEAEEKANEISISSEEEFNIEKLQLVEAEKKKIRQEYEKKEKQVDVRKK) adopt a coiled-coil conformation.

Belongs to the V-ATPase E subunit family. As to quaternary structure, V-ATPase is a heteromultimeric enzyme composed of a peripheral catalytic V1 complex (components A to H) attached to an integral membrane V0 proton pore complex (components: a, c, c'', d and e).

Its subcellular location is the vacuole membrane. Its function is as follows. Subunit of the peripheral V1 complex of vacuolar ATPase essential for assembly or catalytic function. V-ATPase is responsible for acidifying a variety of intracellular compartments in eukaryotic cells. This Arabidopsis thaliana (Mouse-ear cress) protein is V-type proton ATPase subunit E3 (VHA-E3).